A 37-amino-acid polypeptide reads, in one-letter code: Large ribosomal subunit protein bL36c (37 aa).

The protein belongs to the bacterial ribosomal protein bL36 family.

It is found in the plastid. It localises to the chloroplast. The sequence is that of Large ribosomal subunit protein bL36c from Populus alba (White poplar).